A 707-amino-acid chain; its full sequence is Potassium-transporting ATPase ATP-binding subunit (707 aa).

Basic and acidic residues predominate over residues 1 to 11 (MNTDTQKHEDA). A disordered region spans residues 1 to 37 (MNTDTQKHEDAMSTTTPARAPHDDAPSGQQPGQGRVG). 4 consecutive transmembrane segments (helical) span residues 61-81 (VMAKSPVMFVVLVGSVLTTAF), 89-109 (WFGWTISAWLWLTVLFANLAE), 238-258 (IALNILLASLTVVFLLACATL), and 271-291 (MIVLVALLVCLIPTTIGALLS). Aspartate 326 acts as the 4-aspartylphosphate intermediate in catalysis. Residues aspartate 363, glutamate 367, 397-404 (FTAQTRMS), and lysine 415 each bind ATP. Residues aspartate 542 and aspartate 546 each coordinate Mg(2+). 3 helical membrane passes run 612-632 (FAIIPALFAAVYPGLDKLNIM), 640-660 (AILSAVVFNALIILVLVPLAL), and 683-703 (LGGLVAPFIGIKLIDLIVSLI).

This sequence belongs to the cation transport ATPase (P-type) (TC 3.A.3) family. Type IA subfamily. The system is composed of three essential subunits: KdpA, KdpB and KdpC.

It localises to the cell membrane. It carries out the reaction K(+)(out) + ATP + H2O = K(+)(in) + ADP + phosphate + H(+). Functionally, part of the high-affinity ATP-driven potassium transport (or Kdp) system, which catalyzes the hydrolysis of ATP coupled with the electrogenic transport of potassium into the cytoplasm. This subunit is responsible for energy coupling to the transport system and for the release of the potassium ions to the cytoplasm. The chain is Potassium-transporting ATPase ATP-binding subunit from Streptomyces coelicolor (strain ATCC BAA-471 / A3(2) / M145).